Reading from the N-terminus, the 1604-residue chain is E3 ubiquitin-protein ligase HECW1 (1604 aa).

Residues 182–318 (SAAPIFKGIG…LERHAIGDRV (137 aa)) enclose the C2 domain. Disordered stretches follow at residues 350 to 539 (DEEI…CSLP), 572 to 604 (PSAQ…LSEV), 642 to 667 (GIGA…QQGA), and 727 to 826 (STVF…TIDE). Over residues 362–380 (SAETQDSIMNSMVGNSNGE) the composition is skewed to polar residues. Residues 387-396 (EFCKDAKPES) are compositionally biased toward basic and acidic residues. The span at 398–412 (SEGNGVNSSENQNQE) shows a compositional bias: polar residues. 2 stretches are compositionally biased toward acidic residues: residues 435 to 444 (APEEPGELQD) and 458 to 469 (EVAEGLPLDEDS). Residues 494–505 (GAREEEMQKGKD) show a composition bias toward basic and acidic residues. A compositionally biased stretch (acidic residues) spans 580–589 (TEEEDGLEEE). Residues 590–601 (STLKESSEKDGL) show a composition bias toward basic and acidic residues. 3 stretches are compositionally biased toward polar residues: residues 654-667 (STGS…QQGA), 748-762 (DSVQ…STNG), and 803-812 (HNSQPISQLP). The WW 1 domain occupies 826-859 (EPLPPNWEARIDSHGRVFYVDHINRTTTWQRPSM). At Ser871 the chain carries Phosphoserine. Residues 871-898 (SVHQMEQLNRRYQNIQRTMATERAEEDS) are a coiled coil. Residues 890–936 (ATERAEEDSGNQNSEQIPDGGGGGGGGSDSEAESSQSSLDLRREGSL) form a disordered region. Gly residues predominate over residues 908 to 917 (DGGGGGGGGS). 2 positions are modified to phosphoserine: Ser935 and Ser937. The WW 2 domain maps to 1016–1049 (LELPRGWEIKTDHQGKSFFVDHNSRATTFIDPRI). Positions 1269–1604 (SRKELQRNKL…VEETSTFGLE (336 aa)) constitute an HECT domain. Cys1572 serves as the catalytic Glycyl thioester intermediate.

In terms of assembly, interacts with DVL1 and SSR3. As to expression, predominantly expressed in neurons of the spinal cord.

The protein localises to the cytoplasm. The catalysed reaction is S-ubiquitinyl-[E2 ubiquitin-conjugating enzyme]-L-cysteine + [acceptor protein]-L-lysine = [E2 ubiquitin-conjugating enzyme]-L-cysteine + N(6)-ubiquitinyl-[acceptor protein]-L-lysine.. It functions in the pathway protein modification; protein ubiquitination. In terms of biological role, E3 ubiquitin-protein ligase that mediates ubiquitination and subsequent degradation of DVL1. In Mus musculus (Mouse), this protein is E3 ubiquitin-protein ligase HECW1 (Hecw1).